We begin with the raw amino-acid sequence, 387 residues long: Signal-regulatory protein gamma (387 aa).

The signal sequence occupies residues 1-28 (MPVPASWPHPPGPFLLLTLLLGLTEVAG). The 109-residue stretch at 29–137 (EEELQMIQPE…ENVEFKSGPG (109 aa)) folds into the Ig-like V-type domain. The Extracellular portion of the chain corresponds to 29–360 (EEELQMIQPE…QKDQSSDATP (332 aa)). Intrachain disulfides connect C53–C119 and C168–C226. 2 consecutive Ig-like C1-type domains span residues 146–245 (PSAP…ANLS) and 252–340 (PTLE…LAVS). N243, N268, N309, and N317 each carry an N-linked (GlcNAc...) asparagine glycan. The cysteines at positions 271 and 329 are disulfide-linked. A helical transmembrane segment spans residues 361-383 (GPASSLTALLLIAVLLGPIYVPW). The Cytoplasmic segment spans residues 384 to 387 (KQKT).

As to quaternary structure, interacts with CD47. As to expression, detected in liver, and at very low levels in brain, heart, lung, pancreas, kidney, placenta and skeletal muscle. Expressed on CD4+ T-cells, CD8+ T-cells, CD56-bright natural killer (NK) cells, CD20+ cells, and all activated NK cells. Mainly present in the paracortical T-cell area of lymph nodes, with only sparse positive cells in the mantle and in the germinal center of B-cell follicles. In the thymus, primarily expressed in the medulla on mature T-lymphocytes that have undergone thymic selection.

It is found in the membrane. In terms of biological role, probable immunoglobulin-like cell surface receptor. On binding with CD47, mediates cell-cell adhesion. Engagement on T-cells by CD47 on antigen-presenting cells results in enhanced antigen-specific T-cell proliferation and costimulates T-cell activation. The protein is Signal-regulatory protein gamma (SIRPG) of Homo sapiens (Human).